The following is a 104-amino-acid chain: UPF0213 protein YsiG (104 aa).

The 78-residue stretch at 2 to 79 (NQYFTYILQC…KLVRKQKLSL (78 aa)) folds into the GIY-YIG domain.

Belongs to the UPF0213 family.

This is UPF0213 protein YsiG (ysiG) from Lactococcus lactis subsp. lactis (strain IL1403) (Streptococcus lactis).